Reading from the N-terminus, the 62-residue chain is DNA-binding protein 7 (62 aa).

This sequence belongs to the 7 kDa DNA-binding/endoribonuclease P2 family. Monomer.

The protein resides in the cytoplasm. Can constrain negative DNA supercoils. May be involved in maintaining the integrity of the genome at high temperature. In Metallosphaera cuprina (strain Ar-4), this protein is DNA-binding protein 7.